Here is a 472-residue protein sequence, read N- to C-terminus: MNGYGSPYLYMGGPVSQPPRAPLQRTPKCARCRNHGVLSWLKGHKRYCRFKDCTCEKCILIIERQRVMAAQVALRRQQANESLESLIPDSLRALPGPPPPGDAVAAPQPPPASQPSQPQPPRPAAELAAAAALRWTAEPQPGALQAQLAKPDLTEERLGDGKSADNTEVFSDKDTDQRSSPDVAKSKGCFTPESPEIVSVEEGGYAVQKNGGNPESRPDSPKCHAEQNHLLIEGPSGTVSLPFSLKANRPPLEVLKKIFPNQKPTVLELILKGCGGDLVSAVEVLLSSRSSVTGAERTSAEPESLALPSNGHIFEHTLSSYPISSSKWSVGSAFRVPDTLRFSADSSNVVPSPLAGPLQPPFPQPPRYPLMLRNTLARSQSSPFLPNDVTLWNTMTLQQQYQLRSQYVSPFPSNSTSVFRSSPVLPARATEDPRISIPDDGCPFVSKQSIYTEDDYDERSDSSDSRTLNTSS.

Residues 29-76 (CARCRNHGVLSWLKGHKRYCRFKDCTCEKCILIIERQRVMAAQVALRR) constitute a DNA-binding region (DM). Disordered stretches follow at residues 89 to 128 (DSLR…AELA) and 155 to 191 (EERL…GCFT). Pro residues predominate over residues 95–123 (PGPPPPGDAVAAPQPPPASQPSQPQPPRP). Positions 155-179 (EERLGDGKSADNTEVFSDKDTDQRS) are enriched in basic and acidic residues. The DMA domain maps to 249–284 (RPPLEVLKKIFPNQKPTVLELILKGCGGDLVSAVEV). A disordered region spans residues 430–472 (TEDPRISIPDDGCPFVSKQSIYTEDDYDERSDSSDSRTLNTSS).

This sequence belongs to the DMRT family. In terms of assembly, may homodimerize. As to expression, expressed in testis.

The protein resides in the nucleus. Its function is as follows. Probable transcription factor that plays a role in configuring the spinal circuits controlling stride in vertebrates. Involved in neuronal specification within specific subdivision of spinal cord neurons and in the development of a coordinated locomotor network controlling limb movements. May regulate transcription during sexual development. The sequence is that of Doublesex- and mab-3-related transcription factor 3 (DMRT3) from Homo sapiens (Human).